Here is a 483-residue protein sequence, read N- to C-terminus: Isocitrate dehydrogenase [NADP] (483 aa).

Threonine 74 lines the NADP(+) pocket. The D-threo-isocitrate site is built by serine 83, asparagine 85, arginine 89, arginine 99, and arginine 121. A Mg(2+)-binding site is contributed by aspartate 232. Residues 264 to 270 (HGSAPDI) and asparagine 277 contribute to the NADP(+) site.

It belongs to the isocitrate and isopropylmalate dehydrogenases family. Homodimer. It depends on Mg(2+) as a cofactor. Mn(2+) serves as cofactor.

It catalyses the reaction D-threo-isocitrate + NADP(+) = 2-oxoglutarate + CO2 + NADPH. Catalyzes the oxidative decarboxylation of isocitrate to 2-oxoglutarate and carbon dioxide with the concomitant reduction of NADP(+). This chain is Isocitrate dehydrogenase [NADP] (icd), found in Rickettsia bellii (strain RML369-C).